Reading from the N-terminus, the 767-residue chain is Pyrin (767 aa).

The Pyrin domain occupies 1 to 92 (MAKTLGDHLL…AEELRKATGT (92 aa)). A disordered region spans residues 94-219 (HLIEENRVGG…LQGLYNNAPG (126 aa)). 3 stretches are compositionally biased toward polar residues: residues 126–142 (GTQQ…SSQA), 165–176 (LDSQTKPWTRST), and 183–208 (TQGT…SSAG). At serine 241 the chain carries Phosphoserine. The disordered stretch occupies residues 311 to 346 (TSLIGEERCPTSWTENGNGSPETTESSGETAGSILS). The span at 321–340 (TSWTENGNGSPETTESSGET) shows a compositional bias: polar residues. A B box-type zinc finger spans residues 439-481 (QSLPQCPRHMKQVLLLFCEDHREPICLICRLSLEHQGHRVRPI). Zn(2+)-binding residues include cysteine 444, histidine 447, cysteine 467, and histidine 473. Positions 481–510 (IEEAALEYKEQIREQLERLREMRGYVEEHR) form a coiled coil. The tract at residues 489-647 (KEQIREQLER…CFSEMLSSEM (159 aa)) is required for homotrimerization and induction of pyroptosomes. Positions 697-719 (GGSEPKDYLHPQPAQDTPELHEI) are disordered.

Homotrimer. Interacts (via the B box-type zinc finger) with PSTPIP1. Interacts (via the B30.2/SPRY domain) with several components of the inflammasome complex, including CASP1 p20 and p10 subunits, CASP5, PYCARD, NLRP1, NLRP2 and NLRP3, as well as with unprocessed IL1B; this interaction may lead to autophagic degradation of these proteins. Component of the AIM2 PANoptosome complex, a multiprotein complex that drives inflammatory cell death (PANoptosis). Interacts with NFKBIA and RELA. Interacts weakly with VASP and ACTR3. Interacts with active ULK1 (phosphorylated on 'Ser-317') and BECN1 simultaneously. Also interacts with ATG16L1 (via WD repeats), and with ATG8 family members, including GABARAP, GABARAPL1 and, to a lesser extent, GABARAPL2, MAP1LC3A/LC3A and MAP1LC3C/LC3C. Interacts with TRIM21. Interacts with YWHAB, YWHAE, YWHAG, YWHAH, YWHAQ and YWHAZ; the interaction is required for the down-regulation of pyrin pro-inflammatory activity. Post-translationally, phosphorylation at Ser-241 is required for the interaction with 14-3-3 proteins and down-regulation of pyrin pro-inflammatory activity. Degraded along with the delivery of its substrates to autolysosomal compartments (at protein level). Expressed in spleen peripheral blood granulocytes. Not expressed in lymphocytes, thymus, testis, ovary, heart, brain, lung, liver, kidney and muscle.

It localises to the cytoplasm. Its subcellular location is the cytoskeleton. It is found in the cell projection. The protein localises to the ruffle. The protein resides in the lamellipodium. It localises to the cytoplasmic vesicle. Its subcellular location is the autophagosome. It is found in the nucleus. Its function is as follows. Involved in the regulation of innate immunity and the inflammatory response in response to IFNG/IFN-gamma. Organizes autophagic machinery by serving as a platform for the assembly of ULK1, Beclin 1/BECN1, ATG16L1, and ATG8 family members and recognizes specific autophagy targets, thus coordinating target recognition with assembly of the autophagic apparatus and initiation of autophagy. Acts as an autophagy receptor for the degradation of several inflammasome components, including CASP1, NLRP1 and NLRP3, hence preventing excessive IL1B- and IL18-mediated inflammation. However, it can also have a positive effect in the inflammatory pathway, acting as an innate immune sensor that triggers PYCARD/ASC specks formation, caspase-1 activation, and IL1B and IL18 production. Together with AIM2, also acts as a mediator of pyroptosis, necroptosis and apoptosis (PANoptosis), an integral part of host defense against pathogens, in response to bacterial infection. It is required for PSTPIP1-induced PYCARD/ASC oligomerization and inflammasome formation. Recruits PSTPIP1 to inflammasomes, and is required for PSTPIP1 oligomerization. This Mus musculus (Mouse) protein is Pyrin.